Reading from the N-terminus, the 500-residue chain is Arabinofuranosidase/B-xylosidase (500 aa).

A signal peptide spans 1 to 21; that stretch reads MLSNARIIAAGCIAAGSLVAA. Residue Asn467 is glycosylated (N-linked (GlcNAc...) asparagine).

The protein belongs to the glycosyl hydrolase 54 family.

It catalyses the reaction Hydrolysis of terminal non-reducing alpha-L-arabinofuranoside residues in alpha-L-arabinosides.. The catalysed reaction is Hydrolysis of (1-&gt;4)-beta-D-xylans, to remove successive D-xylose residues from the non-reducing termini.. This chain is Arabinofuranosidase/B-xylosidase (xyl1), found in Trichoderma koningii (Hypocrea koningii).